The primary structure comprises 214 residues: Adenylate kinase (214 aa).

Gly10–Thr15 serves as a coordination point for ATP. Residues Ser30–Val59 form an NMP region. Residues Thr31, Arg36, Gln57 to Val59, Gly85 to Arg88, and Gln92 each bind AMP. Residues Gly122–Asp159 are LID. ATP is bound by residues Arg123 and Thr132 to Tyr133. The AMP site is built by Arg156 and Arg167. Position 200 (Lys200) interacts with ATP.

This sequence belongs to the adenylate kinase family. As to quaternary structure, monomer.

It is found in the cytoplasm. The enzyme catalyses AMP + ATP = 2 ADP. It participates in purine metabolism; AMP biosynthesis via salvage pathway; AMP from ADP: step 1/1. Catalyzes the reversible transfer of the terminal phosphate group between ATP and AMP. Plays an important role in cellular energy homeostasis and in adenine nucleotide metabolism. This is Adenylate kinase from Vibrio atlanticus (strain LGP32) (Vibrio splendidus (strain Mel32)).